A 491-amino-acid polypeptide reads, in one-letter code: Cobyric acid synthase (491 aa).

Residues 250–439 (ELNIIVIRLP…LHGIFDNGSW (190 aa)) enclose the GATase cobBQ-type domain. The Nucleophile role is filled by C331. Residue H431 is part of the active site.

The protein belongs to the CobB/CobQ family. CobQ subfamily.

It participates in cofactor biosynthesis; adenosylcobalamin biosynthesis. Functionally, catalyzes amidations at positions B, D, E, and G on adenosylcobyrinic A,C-diamide. NH(2) groups are provided by glutamine, and one molecule of ATP is hydrogenolyzed for each amidation. The protein is Cobyric acid synthase of Microcystis aeruginosa (strain NIES-843 / IAM M-2473).